Consider the following 255-residue polypeptide: Cytochrome c oxidase subunit 2 (255 aa).

Residues 1-16 (MFNLFPPFGANTAIFN) form the signal peptide. Topologically, residues 17-43 (DAPQPWQVGFQDGASPTQEGITELHDS) are mitochondrial intermembrane. A helical transmembrane segment spans residues 44 to 64 (IFFYLVIICFGVLWVLSSVIV). Residues 65–80 (NFNSNKSQLVYKYANH) lie on the Mitochondrial matrix side of the membrane. Residues 81 to 101 (GTLIELIWTITPALVLIAIAF) traverse the membrane as a helical segment. Over 102–255 (PSFKLLYLMD…KYLAWIDSQA (154 aa)) the chain is Mitochondrial intermembrane. The Cu cation site is built by H189, C224, E226, C228, H232, and M235. Position 226 (E226) interacts with Mg(2+).

Belongs to the cytochrome c oxidase subunit 2 family. As to quaternary structure, component of the cytochrome c oxidase (complex IV, CIV), a multisubunit enzyme composed of a catalytic core of 3 subunits and several supernumerary subunits. The complex exists as a monomer or a dimer and forms supercomplexes (SCs) in the inner mitochondrial membrane with ubiquinol-cytochrome c oxidoreductase (cytochrome b-c1 complex, complex III, CIII). It depends on Cu cation as a cofactor.

It is found in the mitochondrion inner membrane. It catalyses the reaction 4 Fe(II)-[cytochrome c] + O2 + 8 H(+)(in) = 4 Fe(III)-[cytochrome c] + 2 H2O + 4 H(+)(out). Functionally, component of the cytochrome c oxidase, the last enzyme in the mitochondrial electron transport chain which drives oxidative phosphorylation. The respiratory chain contains 3 multisubunit complexes succinate dehydrogenase (complex II, CII), ubiquinol-cytochrome c oxidoreductase (cytochrome b-c1 complex, complex III, CIII) and cytochrome c oxidase (complex IV, CIV), that cooperate to transfer electrons derived from NADH and succinate to molecular oxygen, creating an electrochemical gradient over the inner membrane that drives transmembrane transport and the ATP synthase. Cytochrome c oxidase is the component of the respiratory chain that catalyzes the reduction of oxygen to water. Electrons originating from reduced cytochrome c in the intermembrane space (IMS) are transferred via the dinuclear copper A center (CU(A)) of subunit 2 and heme A of subunit 1 to the active site in subunit 1, a binuclear center (BNC) formed by heme A3 and copper B (CU(B)). The BNC reduces molecular oxygen to 2 water molecules using 4 electrons from cytochrome c in the IMS and 4 protons from the mitochondrial matrix. The protein is Cytochrome c oxidase subunit 2 (COX2) of Mycosarcoma maydis (Corn smut fungus).